The sequence spans 154 residues: Ribonuclease H (154 aa).

One can recognise an RNase H type-1 domain in the interval 3–144; sequence ELPVVSIFTD…ADQLARDGVA (142 aa). Positions 12, 50, 72, and 136 each coordinate Mg(2+).

The protein belongs to the RNase H family. As to quaternary structure, monomer. Mg(2+) is required as a cofactor.

It is found in the cytoplasm. The catalysed reaction is Endonucleolytic cleavage to 5'-phosphomonoester.. Its function is as follows. Endonuclease that specifically degrades the RNA of RNA-DNA hybrids. This Bradyrhizobium sp. (strain ORS 278) protein is Ribonuclease H.